The chain runs to 495 residues: Probable cytosol aminopeptidase (495 aa).

Lys-266 and Asp-271 together coordinate Mn(2+). Lys-278 is a catalytic residue. Asp-289, Asp-348, and Glu-350 together coordinate Mn(2+). Arg-352 is a catalytic residue.

Belongs to the peptidase M17 family. Mn(2+) serves as cofactor.

Its subcellular location is the cytoplasm. The catalysed reaction is Release of an N-terminal amino acid, Xaa-|-Yaa-, in which Xaa is preferably Leu, but may be other amino acids including Pro although not Arg or Lys, and Yaa may be Pro. Amino acid amides and methyl esters are also readily hydrolyzed, but rates on arylamides are exceedingly low.. It catalyses the reaction Release of an N-terminal amino acid, preferentially leucine, but not glutamic or aspartic acids.. Its function is as follows. Presumably involved in the processing and regular turnover of intracellular proteins. Catalyzes the removal of unsubstituted N-terminal amino acids from various peptides. This chain is Probable cytosol aminopeptidase, found in Pseudomonas aeruginosa (strain UCBPP-PA14).